Consider the following 274-residue polypeptide: Bis(5'-nucleosyl)-tetraphosphatase, symmetrical (274 aa).

The protein belongs to the Ap4A hydrolase family.

It catalyses the reaction P(1),P(4)-bis(5'-adenosyl) tetraphosphate + H2O = 2 ADP + 2 H(+). Its function is as follows. Hydrolyzes diadenosine 5',5'''-P1,P4-tetraphosphate to yield ADP. The chain is Bis(5'-nucleosyl)-tetraphosphatase, symmetrical from Buchnera aphidicola subsp. Acyrthosiphon pisum (strain Tuc7).